A 203-amino-acid polypeptide reads, in one-letter code: Recombination protein RecR (203 aa).

The segment at 56–71 (CAVCGNVSDEERCRIC) adopts a C4-type zinc-finger fold. The Toprim domain occupies 79–179 (SLICVVEEPK…TVTRIASGLP (101 aa)).

It belongs to the RecR family.

In terms of biological role, may play a role in DNA repair. It seems to be involved in an RecBC-independent recombinational process of DNA repair. It may act with RecF and RecO. The chain is Recombination protein RecR from Mycolicibacterium vanbaalenii (strain DSM 7251 / JCM 13017 / BCRC 16820 / KCTC 9966 / NRRL B-24157 / PYR-1) (Mycobacterium vanbaalenii).